A 368-amino-acid polypeptide reads, in one-letter code: MWDMRAVAPQRPAAGHPRAGWPRKLKTAATRFWATCPSSSTVCFLFVIFAVSTVFHCHRRLALVPAPWAYAGHVVLFPRHLPRGGVFTINAKGRLGNQMGEYATLYALAKMNGRAAFIPPQMHSTLAPIFRITLPVLHDATARSVPWQNYHLNDWMEEQYRHIPGEYVRLTGYPCSWTFYHHLRAEILQEFTLHAHVREEAQNFLRGLRVNGSRPSTYVGVHVRRGDYVRVMPTMWKGVLADRGYLQQALDWFRARHHSPLFVITSDDMAWCRRNINSSHRDVVFAGSGQQGSPARDFALLTQCNHTVITVGTFGIWAAYLAGGSTVYLANFTLPGSRFRMIFKPQAAFLPEWVGIAANLGQARESHP.

The disordered stretch occupies residues 1 to 20; sequence MWDMRAVAPQRPAAGHPRAG. At 1–31 the chain is on the cytoplasmic side; sequence MWDMRAVAPQRPAAGHPRAGWPRKLKTAATR. The chain crosses the membrane as a helical span at residues 32 to 52; that stretch reads FWATCPSSSTVCFLFVIFAVS. Over 53–368 the chain is Lumenal; that stretch reads TVFHCHRRLA…NLGQARESHP (316 aa).

The protein belongs to the glycosyltransferase 11 family. In terms of tissue distribution, kidney.

It is found in the golgi apparatus. Its subcellular location is the golgi stack membrane. The enzyme catalyses a ganglioside GM1 + GDP-beta-L-fucose = a ganglioside Fuc-GM1 + GDP + H(+). Its pathway is protein modification; protein glycosylation. In terms of biological role, catalyzes the transfer of alpha 1,2-linked fucose to ganglioside GM1 and galacto-N-biose. The protein is Galactoside 2-alpha-L-fucosyltransferase SEC1 of Bos taurus (Bovine).